Here is a 344-residue protein sequence, read N- to C-terminus: Phosphoribosylformylglycinamidine cyclo-ligase (344 aa).

It belongs to the AIR synthase family.

The protein resides in the cytoplasm. The catalysed reaction is 2-formamido-N(1)-(5-O-phospho-beta-D-ribosyl)acetamidine + ATP = 5-amino-1-(5-phospho-beta-D-ribosyl)imidazole + ADP + phosphate + H(+). Its pathway is purine metabolism; IMP biosynthesis via de novo pathway; 5-amino-1-(5-phospho-D-ribosyl)imidazole from N(2)-formyl-N(1)-(5-phospho-D-ribosyl)glycinamide: step 2/2. The protein is Phosphoribosylformylglycinamidine cyclo-ligase of Glaesserella parasuis serovar 5 (strain SH0165) (Haemophilus parasuis).